Consider the following 210-residue polypeptide: Putative 4-hydroxy-4-methyl-2-oxoglutarate aldolase (210 aa).

Substrate contacts are provided by residues 87–90 and Arg-109; that span reads GDFV. An a divalent metal cation-binding site is contributed by Asp-110.

This sequence belongs to the class II aldolase/RraA-like family. Homotrimer. It depends on a divalent metal cation as a cofactor.

The enzyme catalyses 4-hydroxy-4-methyl-2-oxoglutarate = 2 pyruvate. It carries out the reaction oxaloacetate + H(+) = pyruvate + CO2. In terms of biological role, catalyzes the aldol cleavage of 4-hydroxy-4-methyl-2-oxoglutarate (HMG) into 2 molecules of pyruvate. Also contains a secondary oxaloacetate (OAA) decarboxylase activity due to the common pyruvate enolate transition state formed following C-C bond cleavage in the retro-aldol and decarboxylation reactions. The polypeptide is Putative 4-hydroxy-4-methyl-2-oxoglutarate aldolase (Halalkalibacterium halodurans (strain ATCC BAA-125 / DSM 18197 / FERM 7344 / JCM 9153 / C-125) (Bacillus halodurans)).